Here is a 429-residue protein sequence, read N- to C-terminus: Phosphomethylpyrimidine synthase (429 aa).

Residues Asn66, Met94, Tyr123, His162, 184 to 186, 225 to 228, and Glu264 each bind substrate; these read SRG and DALR. His268 contributes to the Zn(2+) binding site. Tyr291 contacts substrate. Zn(2+) is bound at residue His332. Positions 408, 411, and 415 each coordinate [4Fe-4S] cluster.

The protein belongs to the ThiC family. The cofactor is [4Fe-4S] cluster.

The catalysed reaction is 5-amino-1-(5-phospho-beta-D-ribosyl)imidazole + S-adenosyl-L-methionine = 4-amino-2-methyl-5-(phosphooxymethyl)pyrimidine + CO + 5'-deoxyadenosine + formate + L-methionine + 3 H(+). It participates in cofactor biosynthesis; thiamine diphosphate biosynthesis. Its function is as follows. Catalyzes the synthesis of the hydroxymethylpyrimidine phosphate (HMP-P) moiety of thiamine from aminoimidazole ribotide (AIR) in a radical S-adenosyl-L-methionine (SAM)-dependent reaction. The protein is Phosphomethylpyrimidine synthase of Sulfurisphaera tokodaii (strain DSM 16993 / JCM 10545 / NBRC 100140 / 7) (Sulfolobus tokodaii).